The sequence spans 615 residues: 1-deoxy-D-xylulose-5-phosphate synthase (615 aa).

Residues His-72 and Gly-111–Ser-113 contribute to the thiamine diphosphate site. Asp-142 is a Mg(2+) binding site. Thiamine diphosphate-binding positions include Gly-143 to Ala-144, Asn-171, Tyr-278, and Glu-360. Mg(2+) is bound at residue Asn-171.

The protein belongs to the transketolase family. DXPS subfamily. As to quaternary structure, homodimer. It depends on Mg(2+) as a cofactor. Thiamine diphosphate is required as a cofactor.

It catalyses the reaction D-glyceraldehyde 3-phosphate + pyruvate + H(+) = 1-deoxy-D-xylulose 5-phosphate + CO2. Its pathway is metabolic intermediate biosynthesis; 1-deoxy-D-xylulose 5-phosphate biosynthesis; 1-deoxy-D-xylulose 5-phosphate from D-glyceraldehyde 3-phosphate and pyruvate: step 1/1. Catalyzes the acyloin condensation reaction between C atoms 2 and 3 of pyruvate and glyceraldehyde 3-phosphate to yield 1-deoxy-D-xylulose-5-phosphate (DXP). The polypeptide is 1-deoxy-D-xylulose-5-phosphate synthase (Campylobacter jejuni subsp. doylei (strain ATCC BAA-1458 / RM4099 / 269.97)).